The primary structure comprises 266 residues: GTP cyclohydrolase FolE2 (266 aa).

Belongs to the GTP cyclohydrolase IV family.

It catalyses the reaction GTP + H2O = 7,8-dihydroneopterin 3'-triphosphate + formate + H(+). Its pathway is cofactor biosynthesis; 7,8-dihydroneopterin triphosphate biosynthesis; 7,8-dihydroneopterin triphosphate from GTP: step 1/1. Functionally, converts GTP to 7,8-dihydroneopterin triphosphate. The protein is GTP cyclohydrolase FolE2 of Methylobacillus flagellatus (strain ATCC 51484 / DSM 6875 / VKM B-1610 / KT).